A 418-amino-acid chain; its full sequence is 3-isopropylmalate dehydratase large subunit (418 aa).

The [4Fe-4S] cluster site is built by cysteine 299, cysteine 359, and cysteine 362.

The protein belongs to the aconitase/IPM isomerase family. LeuC type 2 subfamily. Heterodimer of LeuC and LeuD. Requires [4Fe-4S] cluster as cofactor.

It carries out the reaction (2R,3S)-3-isopropylmalate = (2S)-2-isopropylmalate. It participates in amino-acid biosynthesis; L-leucine biosynthesis; L-leucine from 3-methyl-2-oxobutanoate: step 2/4. Catalyzes the isomerization between 2-isopropylmalate and 3-isopropylmalate, via the formation of 2-isopropylmaleate. The chain is 3-isopropylmalate dehydratase large subunit from Oleidesulfovibrio alaskensis (strain ATCC BAA-1058 / DSM 17464 / G20) (Desulfovibrio alaskensis).